The primary structure comprises 134 residues: uncharacterized protein (134 aa).

The HIT domain occupies 4 to 107; sequence IFTKIINREL…PTHSLSNFSF (104 aa). The Histidine triad motif motif lies at 91–95; sequence HLHIH.

This is an uncharacterized protein from Mycobacterium leprae (strain TN).